A 407-amino-acid polypeptide reads, in one-letter code: Putative cell wall shaping protein YabE (407 aa).

Residues 1 to 31 form the signal peptide; sequence MKKLFSVKLSKSKVILVAACLLLAGSGTAYA. One can recognise a G5 domain in the interval 206-286; sequence ITRIEKVTDV…DKVIAVGTKQ (81 aa).

Its function is as follows. Suggested to be involved in cell wall modification. In Bacillus subtilis (strain 168), this protein is Putative cell wall shaping protein YabE (yabE).